The chain runs to 100 residues: Enhancer of yellow 2 transcription factor (100 aa).

The protein belongs to the ENY2 family. Component of the nuclear pore complex (NPC)-associated AMEX complex (anchoring and mRNA export complex), composed of at least e(y)2 and xmas-2. Component of the SAGA transcription coactivator-HAT complexes, at least composed of Ada2b, e(y)2, Pcaf/Gcn5, Taf10 and Nipped-A/Trrap. Within the SAGA complex, e(y)2, Sgf11, and not/nonstop form an additional subcomplex of SAGA called the DUB module (deubiquitination module). Component of the THO complex, composed of at least e(y)2, HPR1, THO2, THOC5, THOC6 and THOC7. Interacts with e(y)1. Interacts with su(Hw) (via zinc fingers). Interacts with xmas-2; required for localization to the nuclear periphery. Interacts with the nuclear pore complex (NPC).

The protein localises to the nucleus. It is found in the nucleoplasm. Its subcellular location is the cytoplasm. In terms of biological role, involved in mRNA export coupled transcription activation by association with both the AMEX and the SAGA complexes. The SAGA complex is a multiprotein complex that activates transcription by remodeling chromatin and mediating histone acetylation and deubiquitination. Within the SAGA complex, participates in a subcomplex that specifically deubiquitinates histone H2B. The SAGA complex is recruited to specific gene promoters by activators, where it is required for transcription. Required for nuclear receptor-mediated transactivation. Involved in transcription elongation by recruiting the THO complex onto nascent mRNA. The AMEX complex functions in docking export-competent ribonucleoprotein particles (mRNPs) to the nuclear entrance of the nuclear pore complex (nuclear basket). AMEX participates in mRNA export and accurate chromatin positioning in the nucleus by tethering genes to the nuclear periphery. The protein is Enhancer of yellow 2 transcription factor of Drosophila persimilis (Fruit fly).